Consider the following 95-residue polypeptide: L-amino-acid oxidase (95 aa).

Belongs to the flavin monoamine oxidase family. FIG1 subfamily. In terms of assembly, homodimer; non-covalently linked. The cofactor is FAD. N-glycosylated. As to expression, expressed by the venom gland.

It localises to the secreted. The catalysed reaction is an L-alpha-amino acid + O2 + H2O = a 2-oxocarboxylate + H2O2 + NH4(+). It carries out the reaction L-leucine + O2 + H2O = 4-methyl-2-oxopentanoate + H2O2 + NH4(+). The enzyme catalyses L-phenylalanine + O2 + H2O = 3-phenylpyruvate + H2O2 + NH4(+). It catalyses the reaction L-tryptophan + O2 + H2O = indole-3-pyruvate + H2O2 + NH4(+). The catalysed reaction is L-methionine + O2 + H2O = 4-methylsulfanyl-2-oxobutanoate + H2O2 + NH4(+). It carries out the reaction L-arginine + O2 + H2O = 5-guanidino-2-oxopentanoate + H2O2 + NH4(+). Its function is as follows. Catalyzes an oxidative deamination of predominantly hydrophobic and aromatic L-amino acids, thus producing hydrogen peroxide that may contribute to the diverse toxic effects of this enzyme. Is highly active on L-Met, L-Leu, L-Phe, L-Trp, and L-Arg, and no weakly or no active on L-His, L-Tyr, L-Ile, L-Gln, and L-Lys. Exhibits diverse biological activities, such as antibacterial activity against both Gram-positive (B.subtilis) and Gram-negative (E.coli) bacteria, and inhibition of ADP- or collagen-induced platelet aggregation. Effects of snake L-amino oxidases on platelets are controversial, since they either induce aggregation or inhibit agonist-induced aggregation. These different effects are probably due to different experimental conditions. This protein may also induce hemorrhage, hemolysis, edema, apoptosis, and have antiparasitic activities. This chain is L-amino-acid oxidase, found in Naja oxiana (Central Asian cobra).